Reading from the N-terminus, the 434-residue chain is MTDAHHADDVRYQPLSEIDPEVAQAIAGELSRQRDTLEMIASENFVPRSVLQAQGSVLTNKYAEGYPGRRYYGGCEQVDIIEDLARDRAKALFDAEFANVQPHSGAQANAAVLMTLADPGDKIMGLSLAHGGHLTHGMKLNFSGKLYEVAAYGVDPDTMLVDMDQVREQAIKEQPKVIIAGWSAYPRHLDFAAFREIADEVGATLWVDMAHFAGLVAAGLHPSPVPYADVVSSTVHKTLGGPRSGIILAKQDYAKKLNSSVFPGQQGGPLMHAIAAKATALKIAGTDQFAERQARTIEGARILAERLTASDAKAAGIDVLTGGTDVHLVLADLRNSEMDGQQAEDLLHEVGITVNRNAVPFDPRPPMVTSGLRIGTPALATRGFDATAFTEVADIIGTALAQGKSADLESLQARVTKLAEQYPLYEGLEDWTIV.

(6S)-5,6,7,8-tetrahydrofolate is bound by residues leucine 128 and 132 to 134; that span reads GHL. An N6-(pyridoxal phosphate)lysine modification is found at lysine 237.

The protein belongs to the SHMT family. Homodimer. Requires pyridoxal 5'-phosphate as cofactor.

The protein localises to the cytoplasm. It carries out the reaction (6R)-5,10-methylene-5,6,7,8-tetrahydrofolate + glycine + H2O = (6S)-5,6,7,8-tetrahydrofolate + L-serine. The protein operates within one-carbon metabolism; tetrahydrofolate interconversion. Its pathway is amino-acid biosynthesis; glycine biosynthesis; glycine from L-serine: step 1/1. In terms of biological role, catalyzes the reversible interconversion of serine and glycine with tetrahydrofolate (THF) serving as the one-carbon carrier. This reaction serves as the major source of one-carbon groups required for the biosynthesis of purines, thymidylate, methionine, and other important biomolecules. Also exhibits THF-independent aldolase activity toward beta-hydroxyamino acids, producing glycine and aldehydes, via a retro-aldol mechanism. The chain is Serine hydroxymethyltransferase from Corynebacterium efficiens (strain DSM 44549 / YS-314 / AJ 12310 / JCM 11189 / NBRC 100395).